Consider the following 498-residue polypeptide: Glycerol kinase (498 aa).

T12 contributes to the ADP binding site. Positions 12, 13, and 14 each coordinate ATP. T12 is a sn-glycerol 3-phosphate binding site. R16 contributes to the ADP binding site. 3 residues coordinate sn-glycerol 3-phosphate: R82, E83, and Y134. 3 residues coordinate glycerol: R82, E83, and Y134. H230 is subject to Phosphohistidine; by HPr. D244 is a binding site for sn-glycerol 3-phosphate. Positions 244 and 245 each coordinate glycerol. The ADP site is built by T266 and G309. ATP is bound by residues T266, G309, Q313, and G410. ADP is bound by residues G410 and N414.

The protein belongs to the FGGY kinase family. As to quaternary structure, homotetramer and homodimer (in equilibrium). In terms of processing, the phosphoenolpyruvate-dependent sugar phosphotransferase system (PTS), including enzyme I, and histidine-containing protein (HPr) are required for the phosphorylation, which leads to the activation of the enzyme.

The catalysed reaction is glycerol + ATP = sn-glycerol 3-phosphate + ADP + H(+). It participates in polyol metabolism; glycerol degradation via glycerol kinase pathway; sn-glycerol 3-phosphate from glycerol: step 1/1. Activated by phosphorylation and inhibited by fructose 1,6-bisphosphate (FBP). Key enzyme in the regulation of glycerol uptake and metabolism. Catalyzes the phosphorylation of glycerol to yield sn-glycerol 3-phosphate. This chain is Glycerol kinase, found in Staphylococcus aureus (strain Mu50 / ATCC 700699).